We begin with the raw amino-acid sequence, 436 residues long: EPS I polysaccharide export inner membrane protein EpsE (436 aa).

12 helical membrane-spanning segments follow: residues 20–40, 49–69, 91–111, 132–152, 160–180, 184–204, 234–254, 261–281, 307–327, 341–361, 375–395, and 396–416; these read VLGLGAAVASRGAVFLVNIML, FGLFSYAYVTALNLGLFLATG, LCAFIVLLVALIAVAATALYL, MAAIVLIATAFTQALQAFLYA, ASVSIGAALLLLAMLWTMGPI, VVALVIFLAINAGAAASQLVI, VLTTSMGAPVHWICLSMLAAM, LALFSVAFQWYIAITFIPATL, ALLFGGGLSLALGCMAFLLAG, AAASMRSLAVAAALCGISVLL, FAMAAVYSVIYVAAAYLALRL, and GYGAPSIGLAMSAAYCCLILF.

This sequence to E.coli bicyclomycin resistance protein (BCR).

The protein localises to the cell inner membrane. Probably involved in polymerization and/or export of exopolysaccharide EPS I which functions as a virulence factor. May play a role in export of EPS I or its intermediates across the membranes. This is EPS I polysaccharide export inner membrane protein EpsE (epsE) from Ralstonia nicotianae (strain ATCC BAA-1114 / GMI1000) (Ralstonia solanacearum).